A 198-amino-acid polypeptide reads, in one-letter code: FMN-dependent NADH:quinone oxidoreductase (198 aa).

Position 96–99 (96–99 (MYNF)) interacts with FMN.

The protein belongs to the azoreductase type 1 family. Homodimer. FMN serves as cofactor.

It catalyses the reaction 2 a quinone + NADH + H(+) = 2 a 1,4-benzosemiquinone + NAD(+). The catalysed reaction is N,N-dimethyl-1,4-phenylenediamine + anthranilate + 2 NAD(+) = 2-(4-dimethylaminophenyl)diazenylbenzoate + 2 NADH + 2 H(+). Quinone reductase that provides resistance to thiol-specific stress caused by electrophilic quinones. Functionally, also exhibits azoreductase activity. Catalyzes the reductive cleavage of the azo bond in aromatic azo compounds to the corresponding amines. The chain is FMN-dependent NADH:quinone oxidoreductase from Burkholderia mallei (strain ATCC 23344).